The chain runs to 824 residues: Spindle-defective protein 2 (824 aa).

2 stretches are compositionally biased toward acidic residues: residues 16–27 (EIEDSPIDDNDN) and 35–44 (GDVELEEEEV). The disordered stretch occupies residues 16–98 (EIEDSPIDDN…SRPASVMSDK (83 aa)). Positions 59-70 (TNMTNPKVNDLT) are enriched in polar residues. Positions 81-98 (SAASSRSASRPASVMSDK) are enriched in low complexity. Positions 111–131 (ENAIEEYTNQVFADENKADLL) form a coiled coil. The tract at residues 189–252 (RAKPGANDNE…GQYQGPNFDL (64 aa)) is disordered. The segment covering 207–225 (NVPTTSDKSAFITSPMNST) has biased composition (polar residues). Positions 304–324 (NNKNQDLFAALEEARKRRAAQ) form a coiled coil. Disordered regions lie at residues 342 to 372 (KPTS…LTTS) and 433 to 455 (NNGN…VRTM). The span at 349–366 (SGNVVSSTSNDNTTAASS) shows a compositional bias: low complexity.

Interacts with sas-7 (via C-terminus); may be recruited to centrioles by sas-7.

It is found in the cytoplasm. Its subcellular location is the cytoskeleton. It localises to the microtubule organizing center. The protein localises to the centrosome. The protein resides in the centriole. Its function is as follows. Required both for centrosome duplication and maturation. Required for pericentriolar material (PCM) recruitment. This is Spindle-defective protein 2 from Caenorhabditis elegans.